A 1108-amino-acid chain; its full sequence is Eukaryotic translation initiation factor 2-alpha kinase 3 (1108 aa).

The signal sequence occupies residues 1–27 (MERATQPRPRALLLLFLLLGCAAGISA). Residues 28 to 506 (VARARSLLAP…HYSKNIRKKD (479 aa)) lie on the Lumenal side of the membrane. The tract at residues 71–92 (EALPAASGEQESRATESDDDVE) is disordered. Residue N253 is glycosylated (N-linked (GlcNAc...) asparagine). A helical transmembrane segment spans residues 507-527 (PILLLHWWKEIFGTILLCIVA). At 528 to 1108 (TTFIVRRLFH…SSTFSPLPGN (581 aa)) the chain is on the cytoplasmic side. The interval 542–563 (RQRKESETQCQTESKYDSVSAD) is disordered. The region spanning 585 to 1069 (FEPIQCMGRG…ATDIIENAVF (485 aa)) is the Protein kinase domain. Residue 591–599 (MGRGGFGVV) coordinates ATP. Y611 bears the Phosphotyrosine; by autocatalysis mark. Residue K614 coordinates ATP. Residues 639–880 (EHPGIVRYFN…SPKVYLYIQM (242 aa)) are insert loop. The residue at position 707 (S707) is a Phosphoserine. 2 disordered regions span residues 772-818 (DEGH…RMNR) and 832-856 (FKHS…TTLS). The segment covering 785–798 (SPYTRSREGTSSSI) has biased composition (polar residues). Position 794 is a phosphothreonine (T794). Residues 837–856 (SRSSSEATLSTSPTRPTTLS) are compositionally biased toward low complexity. D929 serves as the catalytic Proton acceptor. T974 carries the phosphothreonine modification. Residues 1080 to 1108 (LRQRSRSLSSSGTKHSRQPSSTFSPLPGN) are disordered. S1086 is subject to Phosphoserine. Residues 1097 to 1108 (QPSSTFSPLPGN) are compositionally biased toward polar residues.

Belongs to the protein kinase superfamily. Ser/Thr protein kinase family. GCN2 subfamily. In terms of assembly, forms dimers with HSPA5/BIP in resting cells. Homotetramerizes in response to endoplasmic reticulum (ER) stress, leading to its activation. Interacts with HSP90B1/GRP94. Interacts with DNAJC3; inhibiting EIF2AK3/PERK activity. Interacts with ATAD3A; ATAD3A and EIF2S1/eIF-2-alpha occupy a common binding site within the cytoplasmic loop of EIF2AK3/PERK, leading to prevent EIF2AK3/PERK association with its substrate EIF2S1/eIF-2-alpha. Interacts with MFN2. Interacts with TMEM33. Interacts with PDIA6. Interacts with LACC1. In terms of processing, oligomerization of the N-terminal ER luminal domain by ER stress promotes EIF2AK3/PERK trans-autophosphorylation of the C-terminal cytoplasmic kinase domain at multiple residues including Thr-974 on the kinase activation loop. Autophosphorylated at Tyr-611 following endoplasmic reticulum stress, leading to activate its activity. Dephosphorylated at Tyr-611 by PTPN1/PTP1B, leading to inactivate its enzyme activity. Phosphorylation at Thr-794 by AKT (AKT1, AKT2 and/or AKT3) inactivates EIF2AK3/PERK. Post-translationally, ADP-ribosylated by PARP16 upon ER stress, which increases kinase activity. As to expression, ubiquitous.

It localises to the endoplasmic reticulum membrane. The catalysed reaction is L-seryl-[protein] + ATP = O-phospho-L-seryl-[protein] + ADP + H(+). It carries out the reaction L-threonyl-[protein] + ATP = O-phospho-L-threonyl-[protein] + ADP + H(+). It catalyses the reaction L-tyrosyl-[protein] + ATP = O-phospho-L-tyrosyl-[protein] + ADP + H(+). Its activity is regulated as follows. Inhibited by HSPA5/BIP in absence of stress. Perturbation in protein folding in the endoplasmic reticulum (ER) promotes reversible dissociation from HSPA5/BIP and oligomerization, resulting in trans-autophosphorylation and kinase activity induction. Inactivated following phosphorylation at Thr-794 by AKT (AKT1, AKT2 and/or AKT3). Inhibited by ATAD3A at mitochondria-endoplasmic reticulum contact sites, providing a safe haven for mitochondrial protein translation during ER stress. Its function is as follows. Metabolic-stress sensing protein kinase that phosphorylates the alpha subunit of eukaryotic translation initiation factor 2 (EIF2S1/eIF-2-alpha) in response to various stress, such as unfolded protein response (UPR). Key effector of the integrated stress response (ISR) to unfolded proteins: EIF2AK3/PERK specifically recognizes and binds misfolded proteins, leading to its activation and EIF2S1/eIF-2-alpha phosphorylation. EIF2S1/eIF-2-alpha phosphorylation in response to stress converts EIF2S1/eIF-2-alpha in a global protein synthesis inhibitor, leading to a global attenuation of cap-dependent translation, while concomitantly initiating the preferential translation of ISR-specific mRNAs, such as the transcriptional activators ATF4 and QRICH1, and hence allowing ATF4- and QRICH1-mediated reprogramming. The EIF2AK3/PERK-mediated unfolded protein response increases mitochondrial oxidative phosphorylation by promoting ATF4-mediated expression of COX7A2L/SCAF1, thereby increasing formation of respiratory chain supercomplexes. In contrast to most subcellular compartments, mitochondria are protected from the EIF2AK3/PERK-mediated unfolded protein response due to EIF2AK3/PERK inhibition by ATAD3A at mitochondria-endoplasmic reticulum contact sites. In addition to EIF2S1/eIF-2-alpha, also phosphorylates NFE2L2/NRF2 in response to stress, promoting release of NFE2L2/NRF2 from the BCR(KEAP1) complex, leading to nuclear accumulation and activation of NFE2L2/NRF2. Serves as a critical effector of unfolded protein response (UPR)-induced G1 growth arrest due to the loss of cyclin-D1 (CCND1). Involved in control of mitochondrial morphology and function. The chain is Eukaryotic translation initiation factor 2-alpha kinase 3 (Eif2ak3) from Rattus norvegicus (Rat).